Here is an 89-residue protein sequence, read N- to C-terminus: MSLSKEVKAQILADFGRGENDTGSTEVQVALLTAQINHLQGHFKEHIHDHHSRRGLLRMVNSRRKLLAYLKRTENERYQELIKKLGLRR.

It belongs to the universal ribosomal protein uS15 family. As to quaternary structure, part of the 30S ribosomal subunit. Forms a bridge to the 50S subunit in the 70S ribosome, contacting the 23S rRNA.

Functionally, one of the primary rRNA binding proteins, it binds directly to 16S rRNA where it helps nucleate assembly of the platform of the 30S subunit by binding and bridging several RNA helices of the 16S rRNA. Forms an intersubunit bridge (bridge B4) with the 23S rRNA of the 50S subunit in the ribosome. The sequence is that of Small ribosomal subunit protein uS15 from Shewanella loihica (strain ATCC BAA-1088 / PV-4).